Here is a 285-residue protein sequence, read N- to C-terminus: Urease accessory protein UreD (285 aa).

Belongs to the UreD family. As to quaternary structure, ureD, UreF and UreG form a complex that acts as a GTP-hydrolysis-dependent molecular chaperone, activating the urease apoprotein by helping to assemble the nickel containing metallocenter of UreC. The UreE protein probably delivers the nickel.

The protein resides in the cytoplasm. Its function is as follows. Required for maturation of urease via the functional incorporation of the urease nickel metallocenter. The chain is Urease accessory protein UreD from Citrobacter koseri (strain ATCC BAA-895 / CDC 4225-83 / SGSC4696).